The primary structure comprises 206 residues: Small ribosomal subunit protein uS4 (206 aa).

Positions 98-163 (MRLDNIVYRL…SEKFKTFVEN (66 aa)) constitute an S4 RNA-binding domain.

This sequence belongs to the universal ribosomal protein uS4 family. Part of the 30S ribosomal subunit. Contacts protein S5. The interaction surface between S4 and S5 is involved in control of translational fidelity.

In terms of biological role, one of the primary rRNA binding proteins, it binds directly to 16S rRNA where it nucleates assembly of the body of the 30S subunit. Its function is as follows. With S5 and S12 plays an important role in translational accuracy. In Clostridium beijerinckii (strain ATCC 51743 / NCIMB 8052) (Clostridium acetobutylicum), this protein is Small ribosomal subunit protein uS4.